The sequence spans 706 residues: Elongation factor G (706 aa).

In terms of domain architecture, tr-type G spans 8–297 (SYVRNIGIGA…AVVDYLPSPN (290 aa)). Residues 17–24 (AHIDAGKT), 95–99 (DTPGH), and 149–152 (NKMD) each bind GTP.

Belongs to the TRAFAC class translation factor GTPase superfamily. Classic translation factor GTPase family. EF-G/EF-2 subfamily.

It localises to the cytoplasm. In terms of biological role, catalyzes the GTP-dependent ribosomal translocation step during translation elongation. During this step, the ribosome changes from the pre-translocational (PRE) to the post-translocational (POST) state as the newly formed A-site-bound peptidyl-tRNA and P-site-bound deacylated tRNA move to the P and E sites, respectively. Catalyzes the coordinated movement of the two tRNA molecules, the mRNA and conformational changes in the ribosome. This chain is Elongation factor G, found in Orientia tsutsugamushi (strain Ikeda) (Rickettsia tsutsugamushi).